The primary structure comprises 205 residues: Outer-membrane lipoprotein carrier protein (205 aa).

Positions 1–22 (MKKTTLKFAALTLLGLSNLALA) are cleaved as a signal peptide.

It belongs to the LolA family. As to quaternary structure, monomer.

It localises to the periplasm. In terms of biological role, participates in the translocation of lipoproteins from the inner membrane to the outer membrane. Only forms a complex with a lipoprotein if the residue after the N-terminal Cys is not an aspartate (The Asp acts as a targeting signal to indicate that the lipoprotein should stay in the inner membrane). This is Outer-membrane lipoprotein carrier protein from Haemophilus influenzae (strain PittEE).